A 159-amino-acid polypeptide reads, in one-letter code: 2-C-methyl-D-erythritol 2,4-cyclodiphosphate synthase (159 aa).

D9 and H11 together coordinate a divalent metal cation. 4-CDP-2-C-methyl-D-erythritol 2-phosphate contacts are provided by residues D9–H11 and H35–S36. H43 contacts a divalent metal cation. Residues D57 to G59, F62 to D66, T133 to E136, F140, and R143 contribute to the 4-CDP-2-C-methyl-D-erythritol 2-phosphate site.

It belongs to the IspF family. Homotrimer. A divalent metal cation is required as a cofactor.

The catalysed reaction is 4-CDP-2-C-methyl-D-erythritol 2-phosphate = 2-C-methyl-D-erythritol 2,4-cyclic diphosphate + CMP. The protein operates within isoprenoid biosynthesis; isopentenyl diphosphate biosynthesis via DXP pathway; isopentenyl diphosphate from 1-deoxy-D-xylulose 5-phosphate: step 4/6. In terms of biological role, involved in the biosynthesis of isopentenyl diphosphate (IPP) and dimethylallyl diphosphate (DMAPP), two major building blocks of isoprenoid compounds. Catalyzes the conversion of 4-diphosphocytidyl-2-C-methyl-D-erythritol 2-phosphate (CDP-ME2P) to 2-C-methyl-D-erythritol 2,4-cyclodiphosphate (ME-CPP) with a corresponding release of cytidine 5-monophosphate (CMP). The sequence is that of 2-C-methyl-D-erythritol 2,4-cyclodiphosphate synthase from Mannheimia succiniciproducens (strain KCTC 0769BP / MBEL55E).